Reading from the N-terminus, the 374-residue chain is Protein Brevis radix-like 2 (374 aa).

Disordered regions lie at residues 12–43 (NTNNGGSKKQEEDEEEEDRVIETPRSKQIKSL) and 57–80 (AYKSCKPCSGSSNQNKNRSYADSD). The span at 65-80 (SGSSNQNKNRSYADSD) shows a compositional bias: polar residues. The 56-residue stretch at 143-198 (KEWVAQVEPGVLITFVSLPEGGNDMKRIRFSREMFDKWQAQKWWAENFDKVMELYN) folds into the BRX 1 domain. Residues 205-316 (QSVPLPTPPR…EELSVSNASD (112 aa)) form a disordered region. Composition is skewed to polar residues over residues 246-259 (SSGSLAHQPTTQTQ) and 267-288 (GLATTPKLSSISGTKTETSSVD). The span at 289-307 (ESARSSFSREEEEADHSGE) shows a compositional bias: basic and acidic residues. Positions 319–374 (TEWVEQDEAGVYITIRALPDGTRELRRVRFSREKFGETNARLWWEQNRARIQQQYL) constitute a BRX 2 domain.

Belongs to the BRX family. As to expression, expressed in roots.

The protein localises to the nucleus. The sequence is that of Protein Brevis radix-like 2 (BRXL2) from Arabidopsis thaliana (Mouse-ear cress).